A 311-amino-acid chain; its full sequence is Phosphoglycerate mutase 2 (311 aa).

Residues 16-23 (RHGQSELN), 29-30 (CG), Arg73, 126-129 (ERHY), Lys137, 153-154 (RR), and 243-244 (GS) each bind substrate. His17 acts as the Tele-phosphohistidine intermediate in catalysis. Glu126 functions as the Proton donor/acceptor in the catalytic mechanism.

The protein belongs to the phosphoglycerate mutase family. BPG-dependent PGAM subfamily.

It localises to the cytoplasm. It carries out the reaction (2R)-2-phosphoglycerate = (2R)-3-phosphoglycerate. It participates in carbohydrate degradation; glycolysis; pyruvate from D-glyceraldehyde 3-phosphate: step 3/5. In terms of biological role, could be non-functional. This chain is Phosphoglycerate mutase 2 (GPM2), found in Saccharomyces cerevisiae (strain ATCC 204508 / S288c) (Baker's yeast).